A 433-amino-acid polypeptide reads, in one-letter code: D-amino acid dehydrogenase (433 aa).

Residue 3–17 (IVVLGAGVLGVTSAW) participates in FAD binding.

This sequence belongs to the DadA oxidoreductase family. The cofactor is FAD.

The enzyme catalyses a D-alpha-amino acid + A + H2O = a 2-oxocarboxylate + AH2 + NH4(+). The protein operates within amino-acid degradation; D-alanine degradation; NH(3) and pyruvate from D-alanine: step 1/1. Oxidative deamination of D-amino acids. This Paracoccus denitrificans (strain Pd 1222) protein is D-amino acid dehydrogenase.